The chain runs to 366 residues: CRS2-associated factor 2, mitochondrial (366 aa).

The transit peptide at 1-14 (MLLPRDLLLLPWRR) directs the protein to the mitochondrion. A disordered region spans residues 24–82 (RRLNHHRAPPFSDPDDDPPFTRLAERPPRAPSKKKKKEEEDQGGRIRPPEPASSDLPFD). Residues 60–71 (KEEEDQGGRIRP) are compositionally biased toward basic and acidic residues. CRM domains are found at residues 143-241 (EPLA…QRPQ) and 263-359 (DGLT…SVSL).

As to quaternary structure, part of large ribonucleo-protein complexes that include group IIB introns.

Its subcellular location is the mitochondrion. Its function is as follows. May be involved in the splicing of group IIB introns in mitochondria. In Oryza sativa subsp. japonica (Rice), this protein is CRS2-associated factor 2, mitochondrial.